Consider the following 154-residue polypeptide: Endoribonuclease YbeY (154 aa).

Zn(2+)-binding residues include His-113, His-117, and His-123.

This sequence belongs to the endoribonuclease YbeY family. The cofactor is Zn(2+).

It localises to the cytoplasm. In terms of biological role, single strand-specific metallo-endoribonuclease involved in late-stage 70S ribosome quality control and in maturation of the 3' terminus of the 16S rRNA. The protein is Endoribonuclease YbeY of Vibrio campbellii (strain ATCC BAA-1116).